The chain runs to 438 residues: Putative pectate lyase 14 (438 aa).

Residues 1–26 form the signal peptide; that stretch reads MVVARTLFSISATLIIFLALFLHVNA. N-linked (GlcNAc...) asparagine glycosylation is found at Asn40, Asn46, and Asn73. Asp236, Asp260, and Asp264 together coordinate Ca(2+). Arg316 is an active-site residue.

Belongs to the polysaccharide lyase 1 family. The cofactor is Ca(2+).

The enzyme catalyses Eliminative cleavage of (1-&gt;4)-alpha-D-galacturonan to give oligosaccharides with 4-deoxy-alpha-D-galact-4-enuronosyl groups at their non-reducing ends.. The protein operates within glycan metabolism; pectin degradation; 2-dehydro-3-deoxy-D-gluconate from pectin: step 2/5. This is Putative pectate lyase 14 from Arabidopsis thaliana (Mouse-ear cress).